The following is an 86-amino-acid chain: Omega-theraphotoxin-Hhn1f 4 (86 aa).

The first 21 residues, 1-21 (MKSIVFVALFGLALLAVVCSA), serve as a signal peptide directing secretion. The propeptide occupies 22-50 (SEDAHKELLKEVVRAMVVDKTDAVQAGER). Disulfide bonds link C52/C66, C59/C71, and C65/C78.

Belongs to the neurotoxin 10 (Hwtx-1) family. 17 (Hntx-9) subfamily. As to expression, expressed by the venom gland.

The protein localises to the secreted. Functionally, ion channel inhibitor. The sequence is that of Omega-theraphotoxin-Hhn1f 4 from Cyriopagopus hainanus (Chinese bird spider).